The primary structure comprises 312 residues: Acetaldehyde dehydrogenase (312 aa).

NAD(+) is bound at residue serine 12–isoleucine 15. The active-site Acyl-thioester intermediate is cysteine 132. Residues serine 163–asparagine 171 and asparagine 290 each bind NAD(+).

This sequence belongs to the acetaldehyde dehydrogenase family. Heterotetramer composed of two DmpG (aldolase) and two DmpF (dehydrogenase) subunits, which allows a direct channeling of acetaldehyde between the two active sites.

It catalyses the reaction acetaldehyde + NAD(+) + CoA = acetyl-CoA + NADH + H(+). It functions in the pathway aromatic compound metabolism; phenol degradation. With respect to regulation, is not activated by Mn(2+), Mg(2+), Ca(2+), Zn(2+) or Co(2+). Functionally, catalyzes the conversion of acetaldehyde to acetyl-CoA, using NAD(+) and coenzyme A. Can also act on propanal and butanal to form propanoyl-CoA and butanoyl-CoA, respectively. Is the final enzyme in the meta-cleavage pathway for the degradation of aromatic compounds such as phenols, cresols and catechols. NADP(+) can replace NAD(+) but the rate of reaction is much slower. This chain is Acetaldehyde dehydrogenase (dmpF), found in Pseudomonas sp. (strain CF600).